Reading from the N-terminus, the 345-residue chain is Heat-inducible transcription repressor HrcA (345 aa).

Belongs to the HrcA family.

In terms of biological role, negative regulator of class I heat shock genes (grpE-dnaK-dnaJ and groELS operons). Prevents heat-shock induction of these operons. The protein is Heat-inducible transcription repressor HrcA of Dehalococcoides mccartyi (strain ATCC BAA-2266 / KCTC 15142 / 195) (Dehalococcoides ethenogenes (strain 195)).